Consider the following 129-residue polypeptide: Putative F-box protein At3g42722 (129 aa).

Residues 4-50 form the F-box domain; that stretch reads MASIDCLPDELLVGILSFILTNEAASTSILSKRWRTLFAFSHNLDCN.

This chain is Putative F-box protein At3g42722, found in Arabidopsis thaliana (Mouse-ear cress).